Reading from the N-terminus, the 247-residue chain is Adenosine 5'-phosphosulfate reductase (247 aa).

Residues Cys133, Cys134, Cys216, and Cys219 each contribute to the [4Fe-4S] cluster site. Residues 222-247 (KPAPGSDPRSGRWAGASKTECGLHAS) form a disordered region. Cys242 acts as the Nucleophile; cysteine thiosulfonate intermediate in catalysis.

It belongs to the PAPS reductase family. CysH subfamily. It depends on [4Fe-4S] cluster as a cofactor.

It localises to the cytoplasm. It carries out the reaction [thioredoxin]-disulfide + sulfite + AMP + 2 H(+) = adenosine 5'-phosphosulfate + [thioredoxin]-dithiol. It participates in sulfur metabolism; hydrogen sulfide biosynthesis; sulfite from sulfate. In terms of biological role, catalyzes the formation of sulfite from adenosine 5'-phosphosulfate (APS) using thioredoxin as an electron donor. The sequence is that of Adenosine 5'-phosphosulfate reductase from Rhodococcus erythropolis (strain PR4 / NBRC 100887).